A 343-amino-acid chain; its full sequence is Holliday junction branch migration complex subunit RuvB (343 aa).

Positions 1 to 23 (MSDDFEVVRPEEQAGDEKDRDLR) are disordered. A large ATPase domain (RuvB-L) region spans residues 1-183 (MSDDFEVVRP…FGIVQRFEFY (183 aa)). Residues Leu-22, Arg-23, Gly-64, Lys-67, Thr-68, Thr-69, 130-132 (EDY), Arg-173, Tyr-183, and Arg-220 each bind ATP. A Mg(2+)-binding site is contributed by Thr-68. The small ATPAse domain (RuvB-S) stretch occupies residues 184–254 (SHEELASIIS…TVAAGLKQLN (71 aa)). The tract at residues 257–343 (GLGLETYDRQ…LGDGQEGLFD (87 aa)) is head domain (RuvB-H). Residues Arg-312 and Arg-317 each contribute to the DNA site.

Belongs to the RuvB family. In terms of assembly, homohexamer. Forms an RuvA(8)-RuvB(12)-Holliday junction (HJ) complex. HJ DNA is sandwiched between 2 RuvA tetramers; dsDNA enters through RuvA and exits via RuvB. An RuvB hexamer assembles on each DNA strand where it exits the tetramer. Each RuvB hexamer is contacted by two RuvA subunits (via domain III) on 2 adjacent RuvB subunits; this complex drives branch migration. In the full resolvosome a probable DNA-RuvA(4)-RuvB(12)-RuvC(2) complex forms which resolves the HJ.

The protein localises to the cytoplasm. It catalyses the reaction ATP + H2O = ADP + phosphate + H(+). Functionally, the RuvA-RuvB-RuvC complex processes Holliday junction (HJ) DNA during genetic recombination and DNA repair, while the RuvA-RuvB complex plays an important role in the rescue of blocked DNA replication forks via replication fork reversal (RFR). RuvA specifically binds to HJ cruciform DNA, conferring on it an open structure. The RuvB hexamer acts as an ATP-dependent pump, pulling dsDNA into and through the RuvAB complex. RuvB forms 2 homohexamers on either side of HJ DNA bound by 1 or 2 RuvA tetramers; 4 subunits per hexamer contact DNA at a time. Coordinated motions by a converter formed by DNA-disengaged RuvB subunits stimulates ATP hydrolysis and nucleotide exchange. Immobilization of the converter enables RuvB to convert the ATP-contained energy into a lever motion, pulling 2 nucleotides of DNA out of the RuvA tetramer per ATP hydrolyzed, thus driving DNA branch migration. The RuvB motors rotate together with the DNA substrate, which together with the progressing nucleotide cycle form the mechanistic basis for DNA recombination by continuous HJ branch migration. Branch migration allows RuvC to scan DNA until it finds its consensus sequence, where it cleaves and resolves cruciform DNA. This Treponema denticola (strain ATCC 35405 / DSM 14222 / CIP 103919 / JCM 8153 / KCTC 15104) protein is Holliday junction branch migration complex subunit RuvB.